A 137-amino-acid polypeptide reads, in one-letter code: Nucleoside diphosphate kinase (137 aa).

ATP is bound by residues Lys10, Phe59, Arg87, Thr93, Arg104, and Asn114. His117 (pros-phosphohistidine intermediate) is an active-site residue.

Belongs to the NDK family. As to quaternary structure, homotetramer. Mg(2+) is required as a cofactor.

The protein localises to the cytoplasm. The enzyme catalyses a 2'-deoxyribonucleoside 5'-diphosphate + ATP = a 2'-deoxyribonucleoside 5'-triphosphate + ADP. It carries out the reaction a ribonucleoside 5'-diphosphate + ATP = a ribonucleoside 5'-triphosphate + ADP. Major role in the synthesis of nucleoside triphosphates other than ATP. The ATP gamma phosphate is transferred to the NDP beta phosphate via a ping-pong mechanism, using a phosphorylated active-site intermediate. This chain is Nucleoside diphosphate kinase, found in Streptomyces avermitilis (strain ATCC 31267 / DSM 46492 / JCM 5070 / NBRC 14893 / NCIMB 12804 / NRRL 8165 / MA-4680).